The sequence spans 312 residues: Porphobilinogen deaminase (312 aa).

C241 carries the S-(dipyrrolylmethanemethyl)cysteine modification.

It belongs to the HMBS family. Monomer. Dipyrromethane is required as a cofactor.

The enzyme catalyses 4 porphobilinogen + H2O = hydroxymethylbilane + 4 NH4(+). It functions in the pathway porphyrin-containing compound metabolism; protoporphyrin-IX biosynthesis; coproporphyrinogen-III from 5-aminolevulinate: step 2/4. It participates in porphyrin-containing compound metabolism; chlorophyll biosynthesis. Functionally, tetrapolymerization of the monopyrrole PBG into the hydroxymethylbilane pre-uroporphyrinogen in several discrete steps. In Prosthecochloris aestuarii (strain DSM 271 / SK 413), this protein is Porphobilinogen deaminase.